We begin with the raw amino-acid sequence, 81 residues long: Cytochrome b559 subunit alpha (81 aa).

Residues 21–35 (VIHALTIPALFLAGW) traverse the membrane as a helical segment. Residue His-23 coordinates heme.

The protein belongs to the PsbE/PsbF family. As to quaternary structure, heterodimer of an alpha subunit and a beta subunit. PSII is composed of 1 copy each of membrane proteins PsbA, PsbB, PsbC, PsbD, PsbE, PsbF, PsbH, PsbI, PsbJ, PsbK, PsbL, PsbM, PsbT, PsbX, PsbY, PsbZ, Psb30/Ycf12, peripheral proteins PsbO, CyanoQ (PsbQ), PsbU, PsbV and a large number of cofactors. It forms dimeric complexes. Heme b serves as cofactor.

The protein localises to the cellular thylakoid membrane. In terms of biological role, this b-type cytochrome is tightly associated with the reaction center of photosystem II (PSII). PSII is a light-driven water:plastoquinone oxidoreductase that uses light energy to abstract electrons from H(2)O, generating O(2) and a proton gradient subsequently used for ATP formation. It consists of a core antenna complex that captures photons, and an electron transfer chain that converts photonic excitation into a charge separation. The protein is Cytochrome b559 subunit alpha of Synechococcus sp. (strain JA-3-3Ab) (Cyanobacteria bacterium Yellowstone A-Prime).